The following is a 319-amino-acid chain: Cobalamin biosynthesis protein CbiB (319 aa).

Helical transmembrane passes span 56-76, 82-102, 153-173, 204-224, and 296-316; these read VMWVVVVGATWGVAWGVLALA, WFGWSVEVWMIFTTLAGRSLA, VDGIIAPLFFLFLGGAPLAMA, VANYLPARLSWLLLGIAAGLC, and LMWVASTLALALFIAARCGLS.

It belongs to the CobD/CbiB family.

Its subcellular location is the cell membrane. It functions in the pathway cofactor biosynthesis; adenosylcobalamin biosynthesis. Converts cobyric acid to cobinamide by the addition of aminopropanol on the F carboxylic group. However, the true cosubstrate could be (R)-1-amino-2-propanol O-2-phosphate, leading to cobinamide phosphate. The polypeptide is Cobalamin biosynthesis protein CbiB (Salmonella choleraesuis (strain SC-B67)).